Reading from the N-terminus, the 66-residue chain is DNA gyrase inhibitor YacG (66 aa).

Zn(2+) contacts are provided by C9, C12, C28, and C32. Positions 45–66 are disordered; the sequence is HKIAGSEGSEDELYSGDLEPRH.

Belongs to the DNA gyrase inhibitor YacG family. As to quaternary structure, interacts with GyrB. The cofactor is Zn(2+).

Inhibits all the catalytic activities of DNA gyrase by preventing its interaction with DNA. Acts by binding directly to the C-terminal domain of GyrB, which probably disrupts DNA binding by the gyrase. This chain is DNA gyrase inhibitor YacG, found in Pseudomonas putida (strain ATCC 700007 / DSM 6899 / JCM 31910 / BCRC 17059 / LMG 24140 / F1).